The sequence spans 61 residues: Large ribosomal subunit protein bL32 (61 aa).

Residues 1–16 (MAVPKRKTSPSKRGMR) show a composition bias toward basic residues. The disordered stretch occupies residues 1 to 41 (MAVPKRKTSPSKRGMRRSADALKASTYVEDKNSGELRRPHH). A compositionally biased stretch (basic and acidic residues) spans 28-41 (VEDKNSGELRRPHH).

Belongs to the bacterial ribosomal protein bL32 family.

In Rhizobium rhizogenes (strain K84 / ATCC BAA-868) (Agrobacterium radiobacter), this protein is Large ribosomal subunit protein bL32.